Reading from the N-terminus, the 146-residue chain is Large ribosomal subunit protein uL15 (146 aa).

The disordered stretch occupies residues 18–45; that stretch reads VLGRGLGCGKGKTSGRGHKGQKARSGCA. The segment covering 30-39 has biased composition (basic residues); it reads TSGRGHKGQK.

Belongs to the universal ribosomal protein uL15 family. As to quaternary structure, part of the 50S ribosomal subunit.

Binds to the 23S rRNA. This is Large ribosomal subunit protein uL15 from Anaplasma marginale (strain St. Maries).